The chain runs to 398 residues: Acetate kinase (398 aa).

Asn7 provides a ligand contact to Mg(2+). Lys14 provides a ligand contact to ATP. A substrate-binding site is contributed by Arg90. The active-site Proton donor/acceptor is Asp147. Residues 207 to 211 (HLGNG), 282 to 284 (DMR), and 330 to 334 (GIGEN) contribute to the ATP site. Glu383 is a Mg(2+) binding site.

Belongs to the acetokinase family. In terms of assembly, homodimer. The cofactor is Mg(2+). It depends on Mn(2+) as a cofactor.

It is found in the cytoplasm. The catalysed reaction is acetate + ATP = acetyl phosphate + ADP. It functions in the pathway metabolic intermediate biosynthesis; acetyl-CoA biosynthesis; acetyl-CoA from acetate: step 1/2. In terms of biological role, catalyzes the formation of acetyl phosphate from acetate and ATP. Can also catalyze the reverse reaction. This is Acetate kinase from Symbiobacterium thermophilum (strain DSM 24528 / JCM 14929 / IAM 14863 / T).